A 203-amino-acid polypeptide reads, in one-letter code: MIVDFYFDFLSPFSYLANQRLSKLAQDYGLTIRYNAIDLARVKIAIGNVGPSNRDLKVKLDYLKVDLQRWAQLYGIPLVFPANYNSRRMNIGFYYSGAEAQAAAYVNVVFNAVWGEGIAPDLESLPALVSEKLGWDRSAFEHFLSSNAATERYDEQTHAAIERKVFGVPTMFLGDEMWWGNDRLFMLESAMGRLCRQNADLSS.

Residue Ser-11 is the Nucleophile of the active site. Ser-11 contributes to the glutathione binding site. Residues Lys-43, 53-54, and Tyr-84 each bind substrate; that span reads NR. Residues Val-168 and 179–182 each bind glutathione; that span reads WGND.

It belongs to the GST superfamily. NadH family. Glutathione is required as a cofactor.

The enzyme catalyses 2-hydroxychromene-2-carboxylate = (3E)-4-(2-hydroxyphenyl)-2-oxobut-3-enoate. The protein operates within aromatic compound metabolism; naphthalene degradation. Its function is as follows. Involved in the naphthalene catabolic pathway. Catalyzes the reversible glutathione-dependent isomerization of 2-hydroxychromene-2-carboxylate (HCCA) to trans-O-hydroxybenzylidenepyruvate (THBPA). The chain is 2-hydroxychromene-2-carboxylate isomerase (nahD) from Pseudomonas putida (Arthrobacter siderocapsulatus).